Reading from the N-terminus, the 141-residue chain is Small ribosomal subunit protein bS6 (141 aa).

The segment at 96-141 is disordered; sequence VTGPSEMLKAEENRSERRERRERPEHADGAEGDDSNDSDNSDNADE. Over residues 103 to 124 the composition is skewed to basic and acidic residues; that stretch reads LKAEENRSERRERRERPEHADG. Residues 125 to 141 are compositionally biased toward acidic residues; that stretch reads AEGDDSNDSDNSDNADE.

This sequence belongs to the bacterial ribosomal protein bS6 family.

Functionally, binds together with bS18 to 16S ribosomal RNA. The sequence is that of Small ribosomal subunit protein bS6 from Pseudomonas entomophila (strain L48).